The primary structure comprises 358 residues: Alanine racemase (358 aa).

Residue Lys-35 is the Proton acceptor; specific for D-alanine of the active site. Lys-35 bears the N6-(pyridoxal phosphate)lysine mark. Position 130 (Arg-130) interacts with substrate. Tyr-255 acts as the Proton acceptor; specific for L-alanine in catalysis. Residue Met-303 participates in substrate binding.

It belongs to the alanine racemase family. Pyridoxal 5'-phosphate is required as a cofactor.

The enzyme catalyses L-alanine = D-alanine. The protein operates within amino-acid biosynthesis; D-alanine biosynthesis; D-alanine from L-alanine: step 1/1. Catalyzes the interconversion of L-alanine and D-alanine. May also act on other amino acids. The polypeptide is Alanine racemase (alr) (Shewanella oneidensis (strain ATCC 700550 / JCM 31522 / CIP 106686 / LMG 19005 / NCIMB 14063 / MR-1)).